A 1720-amino-acid polypeptide reads, in one-letter code: TOG array regulator of axonemal microtubules protein 1 (1720 aa).

TOG regions lie at residues 94–312 and 352–596; these read EEDT…RRLE and PQEL…MPSS. 8 HEAT repeats span residues 175–212, 214–247, 251–289, 345–384, 390–427, 431–466, 467–504, and 506–543; these read AFSLALLPQLVVSLREENPALRKDALQILHICLKRSPG, VLRTLIQQGLESTDARLRASTALLLPILLTTEDL, LDLTEVIISLARKLGDQETEEESETAFSALQQIGERLGQ, NLKFGIIPQELHSRLLDQEDYKNRTQAVEELKQVLGKFNP, SSLVGFISLLYNLLDDSNFKVVHGTLEVLHLLVIRLGE, QFLGPVIAASVKVLADNKLVIKQEYMKIFLKLMKEV, GPQQVLCLLLEHLKHKHSRVREEVVNICICSLLTYPSE, and FDLPKLSFDLAPALVDSKRRVRQAALEAFAVLASSMGS. Composition is skewed to polar residues over residues 794 to 809, 819 to 829, 842 to 852, and 868 to 877; these read FGSQTECTSSNGQNPS, PVSSPRTSPKH, DNSVNFSNSWP, and LVSQKSSDPT. Disordered stretches follow at residues 794–924, 970–998, and 1067–1087; these read FGSQ…SLLP, HSSLRSLRNSAAKKRAKLSGSTSDLESPD, and KKISHIAEQSPSAGSSSNPQQ. The span at 1073–1087 shows a compositional bias: polar residues; the sequence is AEQSPSAGSSSNPQQ. The tract at residues 1256-1425 is TOG 3; it reads EIALTEALRL…YIKDSVRNLQ (170 aa). HEAT repeat units follow at residues 1294 to 1331 and 1335 to 1372; these read TKLHETNFAVVQEVKNLRSGVSRAAVVCLSDLFTYLKK and QELDTTVKVLLHKAGESNTFIREDVDKALRAMVNNVTP. Residues 1430 to 1462 form a disordered region; that stretch reads GEIPLDTPSAKGRRSHTGSVGNTRSSSVSRDAF. Over residues 1446 to 1458 the composition is skewed to polar residues; that stretch reads TGSVGNTRSSSVS. A TOG 4 region spans residues 1484–1720; the sequence is SLESAEYLKL…LLDMTILNEL (237 aa). HEAT repeat units follow at residues 1485–1522, 1526–1563, and 1567–1605; these read LESAEYLKLITGLLNAKDFRDRINGIKQLLSDTENNQD, GNIVKIFDAFKSRLHDSNSKVNLVALETMHKMIPLLRD, and PIINMLIPAIVDNNLNSKNPGIYAAATNVVQALSQHVDN.

This sequence belongs to the Crescerin family. As to quaternary structure, interacts with ARMC9, CCDC66, CEP104 and CSPP1.

It localises to the cell projection. Its subcellular location is the cilium. It is found in the cytoplasm. The protein localises to the cytoskeleton. The protein resides in the cilium axoneme. In terms of biological role, involved in ciliogenesis. It is required for appropriate acetylation and polyglutamylation of ciliary microtubules, and regulation of cilium length. Interacts with microtubules and promotes microtubule polymerization via its HEAT repeat domains, especially those in TOG region 2 and 4. The sequence is that of TOG array regulator of axonemal microtubules protein 1 from Homo sapiens (Human).